Consider the following 1135-residue polypeptide: DNA-directed RNA polymerase I subunit RPA2 (1135 aa).

The tract at residues 1-24 is disordered; the sequence is MDPGSRWRNLPSGPSLKHLTDPSY. R180 contacts RNA. Residues 194-208 form a loop B region; that stretch reads IRPKWKTRGPGYTQY. The tract at residues 236-247 is loop A; sequence LNFIYRKELFFL. D367 contacts RNA. Fork loop stretches follow at residues 439 to 453 and 474 to 489; these read LRSKTGLGLLQDSGL and RGADFAKMRTTTVRRL. D755 is a binding site for Mg(2+). Residue K890 coordinates RNA. Residues R1020 and R1036 each coordinate DNA. Phosphoserine is present on S1051. Residues C1070, C1073, C1098, and C1101 each contribute to the Zn(2+) site. The C4-type zinc-finger motif lies at 1070 to 1101; sequence CVKCGSLLSPLLEKPPPSWSAMRNRKYNCTLC.

It belongs to the RNA polymerase beta chain family. In terms of assembly, component of the RNA polymerase I (Pol I) complex consisting of 13 subunits: a ten-subunit catalytic core composed of POLR1A/RPA1, POLR1B/RPA2, POLR1C/RPAC1, POLR1D/RPAC2, POLR1H/RPA12, POLR2E/RPABC1, POLR2F/RPABC2, POLR2H/RPABC3, POLR2K/RPABC4 and POLR2L/RPABC5; a mobile stalk subunit POLR1F/RPA43 protruding from the core and additional subunits homologous to general transcription factors POLR1E/RPA49 and POLR1G/RPA34. Part of Pol I pre-initiation complex (PIC), in which Pol I core assembles with RRN3 and promoter-bound UTBF and SL1/TIF-IB complex. The cofactor is Mg(2+).

Its subcellular location is the nucleus. The protein localises to the nucleolus. It is found in the chromosome. The catalysed reaction is RNA(n) + a ribonucleoside 5'-triphosphate = RNA(n+1) + diphosphate. Functionally, catalytic core component of RNA polymerase I (Pol I), a DNA-dependent RNA polymerase which synthesizes ribosomal RNA precursors using the four ribonucleoside triphosphates as substrates. Transcribes 47S pre-rRNAs from multicopy rRNA gene clusters, giving rise to 5.8S, 18S and 28S ribosomal RNAs. Pol I-mediated transcription cycle proceeds through transcription initiation, transcription elongation and transcription termination stages. During transcription initiation, Pol I pre-initiation complex (PIC) is recruited by the selectivity factor 1 (SL1/TIF-IB) complex bound to the core promoter that precedes an rDNA repeat unit. The PIC assembly bends the promoter favoring the formation of the transcription bubble and promoter escape. Once the polymerase has escaped from the promoter it enters the elongation phase during which RNA is actively polymerized, based on complementarity with the template DNA strand. Highly processive, assembles in structures referred to as 'Miller trees' where many elongating Pol I complexes queue and transcribe the same rDNA coding regions. At terminator sequences downstream of the rDNA gene, PTRF interacts with Pol I and halts Pol I transcription leading to the release of the RNA transcript and polymerase from the DNA. Forms Pol I active center together with the largest subunit POLR1A/RPA1. Appends one nucleotide at a time to the 3' end of the nascent RNA, with POLR1A/RPA1 contributing a Mg(2+)-coordinating DxDGD motif, and POLR1B/RPA2 participating in the coordination of a second Mg(2+) ion and providing lysine residues believed to facilitate Watson-Crick base pairing between the incoming nucleotide and the template base. Typically, Mg(2+) ions direct a 5' nucleoside triphosphate to form a phosphodiester bond with the 3' hydroxyl of the preceding nucleotide of the nascent RNA, with the elimination of pyrophosphate. Has proofreading activity: Pauses and backtracks to allow the cleavage of a missincorporated nucleotide via POLR1H/RPA12. High Pol I processivity is associated with decreased transcription fidelity. The polypeptide is DNA-directed RNA polymerase I subunit RPA2 (Homo sapiens (Human)).